The chain runs to 118 residues: MIAGIGVDVVDLARFGRSLARTPALRDRLFTEAERGLPVHSLAARFAAKEALIKALGGSEGVRWHDLEIVSDEERNPAFVLRNVVERQALERGIAHIHVSMSHDAGIATAFVVLERDS.

Positions 8 and 50 each coordinate Mg(2+).

This sequence belongs to the P-Pant transferase superfamily. AcpS family. The cofactor is Mg(2+).

Its subcellular location is the cytoplasm. The catalysed reaction is apo-[ACP] + CoA = holo-[ACP] + adenosine 3',5'-bisphosphate + H(+). In terms of biological role, transfers the 4'-phosphopantetheine moiety from coenzyme A to a Ser of acyl-carrier-protein. This Leifsonia xyli subsp. xyli (strain CTCB07) protein is Holo-[acyl-carrier-protein] synthase.